The sequence spans 66 residues: Sodium channel alpha-toxin Acra8 (66 aa).

Positions 2–64 constitute an LCN-type CS-alpha/beta domain; that stretch reads RDGYIVDDKN…VPIKEKGRCN (63 aa). 4 disulfide bridges follow: cysteine 12-cysteine 63, cysteine 16-cysteine 36, cysteine 22-cysteine 46, and cysteine 26-cysteine 48. Asparagine 64 carries the post-translational modification Asparagine amide. The propeptide occupies 65–66; that stretch reads GR.

It belongs to the long (4 C-C) scorpion toxin superfamily. Sodium channel inhibitor family. Alpha subfamily. In terms of tissue distribution, expressed by the venom gland.

Its subcellular location is the secreted. Alpha toxins bind voltage-independently at site-3 of sodium channels (Nav) and inhibit the inactivation of the activated channels, thereby blocking neuronal transmission. This chain is Sodium channel alpha-toxin Acra8, found in Androctonus crassicauda (Arabian fat-tailed scorpion).